The sequence spans 185 residues: NEDD8-conjugating enzyme UBE2F (185 aa).

The residue at position 1 (M1) is an N-acetylmethionine. The region spanning 32–185 (VRDKLLVKEV…VDEYIKRYAR (154 aa)) is the UBC core domain. C116 serves as the catalytic Glycyl thioester intermediate.

This sequence belongs to the ubiquitin-conjugating enzyme family. UBE2F subfamily. In terms of assembly, interacts with UBA3 and RBX2. Interacts (N-terminally acetylated form) with (via DCUN1 domain) DCUN1D1, DCUN1D2, DCUN1D3, DCUN1D4 and DCUN1D5. In terms of processing, the acetylation of Met-1 increases affinity for DCUN1D3 by about 2 orders of magnitude and is crucial for NEDD8 transfer to cullins.

It carries out the reaction [E1 NEDD8-activating enzyme]-S-[NEDD8 protein]-yl-L-cysteine + [E2 NEDD8-conjugating enzyme]-L-cysteine = [E1 NEDD8-activating enzyme]-L-cysteine + [E2 NEDD8-conjugating enzyme]-S-[NEDD8-protein]-yl-L-cysteine.. Its pathway is protein modification; protein neddylation. Accepts the ubiquitin-like protein NEDD8 from the UBA3-NAE1 E1 complex and catalyzes its covalent attachment to other proteins. Together with the E3 ubiquitin ligase RNF7/RBX2, specifically neddylates cullin-5 (CUL5). Does not neddylate CUL1, CUL2, CUL3, CUL4A or CUL4B. Mediates neddylation of the CUL9-RBX1 complex. In Rattus norvegicus (Rat), this protein is NEDD8-conjugating enzyme UBE2F (Ube2f).